The chain runs to 359 residues: Pyruvate dehydrogenase E1 component subunit beta, mitochondrial (359 aa).

A mitochondrion-targeting transit peptide spans 1–30 (MAAVAGLVRGPLRQASGLLKRRFHRSAPAA). At Tyr67 the chain carries Phosphotyrosine. Glu89 is a thiamine diphosphate binding site. Residues Ile142, Ala190, Ile191, Asp193, and Asn195 each coordinate K(+). Residue Lys354 is modified to N6-acetyllysine.

As to quaternary structure, heterotetramer of two PDHA1 and two PDHB subunits. The heterotetramer interacts with DLAT, and is part of the multimeric pyruvate dehydrogenase complex that contains multiple copies of pyruvate dehydrogenase (E1), dihydrolipoamide acetyltransferase (DLAT, E2) and lipoamide dehydrogenase (DLD, E3). These subunits are bound to an inner core composed of about 48 DLAT and 12 PDHX molecules. Interacts with DLAT. Thiamine diphosphate is required as a cofactor.

It is found in the mitochondrion matrix. The catalysed reaction is N(6)-[(R)-lipoyl]-L-lysyl-[protein] + pyruvate + H(+) = N(6)-[(R)-S(8)-acetyldihydrolipoyl]-L-lysyl-[protein] + CO2. Functionally, the pyruvate dehydrogenase complex catalyzes the overall conversion of pyruvate to acetyl-CoA and CO(2), and thereby links the glycolytic pathway to the tricarboxylic cycle. This is Pyruvate dehydrogenase E1 component subunit beta, mitochondrial (Pdhb) from Rattus norvegicus (Rat).